The sequence spans 117 residues: Serine rich endogenous peptide 5 (117 aa).

Positions 1 to 31 are cleaved as a signal peptide; sequence MATKTSNFVSLRVSLFILLLFISSQVAIADA. Residues 41-55 carry the SCOOP motif motif; the sequence is LQIVRRSRSQRGRQY. Basic residues predominate over residues 42 to 51; it reads QIVRRSRSQR. The interval 42-117 is disordered; the sequence is QIVRRSRSQR…LPYASSPTST (76 aa). Residues 47 to 49 carry the SxS motif essential for MIK2 binding motif; sequence SRS. Positions 60–84 are enriched in pro residues; it reads LRVPPPPPPPLPQMPSAATPPPMPQ.

As to quaternary structure, interacts with MIK2 (via extracellular leucine-rich repeat domain); this interaction triggers the formation of complex between MIK2 and the BAK1/SERK3 and SERK4 coreceptors, and subsequent BAK1 activation by phosphorylation.

Its subcellular location is the cell membrane. It is found in the secreted. The protein resides in the extracellular space. The protein localises to the apoplast. Brassicaceae-specific phytocytokine (plant endogenous peptide released into the apoplast) perceived by MIK2 in a BAK1/SERK3 and SERK4 coreceptors-dependent manner, that modulates various physiological and antimicrobial processes including growth prevention and reactive oxygen species (ROS) response regulation. The polypeptide is Serine rich endogenous peptide 5 (Arabidopsis thaliana (Mouse-ear cress)).